The following is a 511-amino-acid chain: Cytochrome P450 89A9 (511 aa).

A helical; Signal-anchor for type II membrane protein membrane pass occupies residues 6–26; the sequence is IIFLIISSLTFSIFLKLIFFF. Cysteine 454 lines the heme pocket.

It belongs to the cytochrome P450 family. It depends on heme as a cofactor.

The protein localises to the endoplasmic reticulum membrane. The catalysed reaction is primary fluorescent chlorophyll catabolite + reduced [NADPH--hemoprotein reductase] + O2 = primary fluorescent dioxobilin-type chlorophyll catabolite + formate + oxidized [NADPH--hemoprotein reductase] + 2 H(+). It participates in porphyrin-containing compound metabolism; chlorophyll degradation. Involved in the chlorophyll breakdown by its action in nonpolar primary fluorescent chlorophyll catabolite (pFCC) decarbonylation. Involved in the formation of major chlorophyll breakdown products, including non-fluorescent dioxobilin-type chlorophyll catabolites (NDCCs), during leaf senescence. The protein is Cytochrome P450 89A9 of Arabidopsis thaliana (Mouse-ear cress).